The sequence spans 184 residues: NADH-dependent flavin reductase subunit 2 (184 aa).

This sequence belongs to the NADH-dependent flavin reductase family. Requires LJ_0548 for activity, but the exact composition of the enzyme is unclear.

It catalyses the reaction a reduced flavin + NAD(+) = an oxidized flavin + NADH + 2 H(+). Functionally, component of an enzyme that catalyzes the reduction of free flavins (FMN, FAD and riboflavin) by NADH; the reduced flavins produced by this reaction likely spontaneously react with oxygen, yielding hydrogen peroxide. Is responsible for the major H(2)O(2) production in L.johnsonii in the presence of oxygen. Cannot use NADPH instead of NADH as the electron donor. This is NADH-dependent flavin reductase subunit 2 (nfr2) from Lactobacillus johnsonii (strain CNCM I-12250 / La1 / NCC 533).